The following is a 186-amino-acid chain: Putative 3-methyladenine DNA glycosylase (186 aa).

The protein belongs to the DNA glycosylase MPG family.

The chain is Putative 3-methyladenine DNA glycosylase from Borreliella burgdorferi (strain ATCC 35210 / DSM 4680 / CIP 102532 / B31) (Borrelia burgdorferi).